A 201-amino-acid chain; its full sequence is E3 ubiquitin-protein ligase MIR1 (201 aa).

The RING-CH-type zinc-finger motif lies at 1 to 58; that stretch reads MDSTGEFCWICHQPEGPLKRFCGCKGSCAVSHQDCLRGWLETSRRQTCALCGTPYSMK. At 1 to 81 the chain is on the cytoplasmic side; sequence MDSTGEFCWI…EEVLAAMEAC (81 aa). 8 residues coordinate Zn(2+): Cys8, Cys11, Cys22, Cys24, His32, Cys35, Cys48, and Cys51. The segment at 52–79 is DIRT; the sequence is GTPYSMKWKTKPLREWTWGEEEVLAAME. The helical transmembrane segment at 82 to 102 threads the bilayer; that stretch reads LPLVLIPLAVLMIVMGTWLLV. Topologically, residues 103–113 are extracellular; the sequence is NHNGFLSPRMQ. A helical transmembrane segment spans residues 114–134; it reads VVLVVIVLLAMIVFSASASYV. Residues 135–201 lie on the Cytoplasmic side of the membrane; the sequence is MVEGPGCLDT…RLGCVRLCCV (67 aa).

Interacts with host UBE2J2.

The protein localises to the host endoplasmic reticulum membrane. It carries out the reaction [E2 ubiquitin-conjugating enzyme]-S-ubiquitinyl-L-cysteine + [acceptor protein]-L-cysteine = [E2 ubiquitin-conjugating enzyme]-L-cysteine + [acceptor protein]-S-ubiquitinyl-L-cysteine.. It functions in the pathway protein modification; protein ubiquitination. Its function is as follows. E3 ubiquitin-protein ligase that mediates ubiquitination of host surface class I (MHC-I) H-2D(b)/H2-D1 and H-2K(b)/H2-K1 molecules before they exit the endoplasmic reticulum, leading to their degradation by the endoplasmic reticulum-associated degradation (ERAD) system, thus blocking the immune detection of virus-infected cells. Mediates ubiquitination of lysine, as well as serine and threonine residues present in the cytoplasmic tail of surface class I molecules. Promotes ubiquitination of hydroxylated serine or threonine residues via ester bonds instead of the classical isopeptide linkage. The protein is E3 ubiquitin-protein ligase MIR1 (K3) of Murid herpesvirus 4 (MuHV-4).